The following is a 1530-amino-acid chain: DNA-directed RNA polymerase III subunit RPC1 (1530 aa).

Residues C74, C77, C84, H87, C114, C117, and C161 each coordinate Zn(2+). Residues D503, D505, and D507 each coordinate Mg(2+). Residues 846–858 (PTEFFFHTMAGRE) form a bridging helix region. A compositionally biased stretch (basic and acidic residues) spans 992 to 1001 (EEQESREDAL). Disordered regions lie at residues 992-1016 (EEQESREDALHNSNGKTNDRESRPR) and 1057-1099 (NLLN…SKEG).

The protein belongs to the RNA polymerase beta' chain family. Component of the RNA polymerase III (Pol III) complex consisting of 17 subunits.

It localises to the nucleus. The catalysed reaction is RNA(n) + a ribonucleoside 5'-triphosphate = RNA(n+1) + diphosphate. DNA-dependent RNA polymerase catalyzes the transcription of DNA into RNA using the four ribonucleoside triphosphates as substrates. Largest and catalytic core component of RNA polymerase III which synthesizes small RNAs, such as 5S rRNA and tRNAs. Forms the polymerase active center together with the second largest subunit. A single-stranded DNA template strand of the promoter is positioned within the central active site cleft of Pol III. A bridging helix emanates from RPC1 and crosses the cleft near the catalytic site and is thought to promote translocation of Pol III by acting as a ratchet that moves the RNA-DNA hybrid through the active site by switching from straight to bent conformations at each step of nucleotide addition. The chain is DNA-directed RNA polymerase III subunit RPC1 from Trypanosoma brucei brucei.